The primary structure comprises 327 residues: tRNA dimethylallyltransferase (327 aa).

14 to 21 is an ATP binding site; the sequence is GPTASGKT. 16-21 serves as a coordination point for substrate; sequence TASGKT. 2 interaction with substrate tRNA regions span residues 39–42 and 163–167; these read DSAL and QRIQR.

Belongs to the IPP transferase family. In terms of assembly, monomer. Mg(2+) is required as a cofactor.

It catalyses the reaction adenosine(37) in tRNA + dimethylallyl diphosphate = N(6)-dimethylallyladenosine(37) in tRNA + diphosphate. Its function is as follows. Catalyzes the transfer of a dimethylallyl group onto the adenine at position 37 in tRNAs that read codons beginning with uridine, leading to the formation of N6-(dimethylallyl)adenosine (i(6)A). The sequence is that of tRNA dimethylallyltransferase from Xanthomonas oryzae pv. oryzae (strain PXO99A).